Consider the following 294-residue polypeptide: Nucleotide-binding protein Swol_0262 (294 aa).

Residue 15–22 (GLSGAGKT) participates in ATP binding. GTP is bound at residue 65 to 68 (DVRG).

It belongs to the RapZ-like family.

In terms of biological role, displays ATPase and GTPase activities. In Syntrophomonas wolfei subsp. wolfei (strain DSM 2245B / Goettingen), this protein is Nucleotide-binding protein Swol_0262.